The following is a 682-amino-acid chain: ATP-dependent DNA helicase RecG (682 aa).

The segment at 46 to 139 is wedge domain; sequence ELRDLEEVKH…LKNGPHQEDK (94 aa). The Helicase ATP-binding domain maps to 271 to 432; the sequence is DMSSPYRMNR…VFGEMDVSVI (162 aa). 284-291 contributes to the ATP binding site; the sequence is GDVGSGKT. Positions 385–388 match the DEAH box motif; sequence DEQH. The 161-residue stretch at 451–611 folds into the Helicase C-terminal domain; sequence MLDRILAFVE…GFELSEKDLE (161 aa).

The protein belongs to the helicase family. RecG subfamily. In terms of assembly, monomer. Interacts with SSB (sbbA), via the latter's 6 C-terminal residues. Colocalizes with DNA pol III subunit gamma/tau (dnaX).

Its subcellular location is the cytoplasm. It localises to the nucleoid. The enzyme catalyses Couples ATP hydrolysis with the unwinding of duplex DNA by translocating in the 3'-5' direction.. It carries out the reaction ATP + H2O = ADP + phosphate + H(+). Replication fork regression on Holliday junctions (HJ) is inhibited by DisA; DisA inhibits the ATPase activity of RecG. Its function is as follows. Critical role in recombination and DNA repair. Helps process Holliday junction intermediates to mature products by catalyzing branch migration. Has a DNA unwinding activity characteristic of a DNA helicase with 3'-5' polarity. Unwinds branched duplex DNA (Y-DNA), Holliday junction (HJ) DNA and partially replicated forks as well as catalyzing fork reversal/regression. Does not seem to unwind R-loops. Inhibits the diadenylate cyclase (DAC) activity of DisA in the presence but not absence of HJ DNA, possibly by relocating DisA from the junction. This is ATP-dependent DNA helicase RecG from Bacillus subtilis (strain 168).